A 124-amino-acid chain; its full sequence is Fluoride-specific ion channel FluC (124 aa).

The next 4 helical transmembrane spans lie at 4 to 24, 35 to 55, 67 to 87, and 96 to 116; these read IVLL…LAGL, LGTF…WGVC, VVLL…TFES, and WLAF…LLWL. Na(+) is bound by residues glycine 75 and threonine 78.

The protein belongs to the fluoride channel Fluc/FEX (TC 1.A.43) family.

The protein resides in the cell inner membrane. It carries out the reaction fluoride(in) = fluoride(out). Na(+) is not transported, but it plays an essential structural role and its presence is essential for fluoride channel function. Functionally, fluoride-specific ion channel. Important for reducing fluoride concentration in the cell, thus reducing its toxicity. This is Fluoride-specific ion channel FluC from Nitratidesulfovibrio vulgaris (strain DSM 19637 / Miyazaki F) (Desulfovibrio vulgaris).